Consider the following 183-residue polypeptide: uncharacterized protein (183 aa).

Belongs to the chlamydial CPn_0803/CT_584/TC_0873 family.

This is an uncharacterized protein from Chlamydia muridarum (strain MoPn / Nigg).